A 231-amino-acid polypeptide reads, in one-letter code: NADH-ubiquinone oxidoreductase chain 4 (231 aa).

7 consecutive transmembrane segments (helical) span residues 1 to 21 (PIAGSMVLAAILLKLGGYGII), 34 to 54 (MFLPFIVLALWGAILANLTCL), 63 to 85 (IAYSSISHMGLVVAAIIIQTPWG), 89 to 111 (AMALMIAHGFTSSALFCLANTTY), 128 to 148 (ILPMATTWWLLTNLMNIAIPP), 156 to 176 (LLIMSALFNWCPTTIIMLGLS), and 211 to 231 (LLMILHLIPLMMISMKPELII).

The protein belongs to the complex I subunit 4 family.

Its subcellular location is the mitochondrion membrane. It catalyses the reaction a ubiquinone + NADH + 5 H(+)(in) = a ubiquinol + NAD(+) + 4 H(+)(out). In terms of biological role, core subunit of the mitochondrial membrane respiratory chain NADH dehydrogenase (Complex I) that is believed to belong to the minimal assembly required for catalysis. Complex I functions in the transfer of electrons from NADH to the respiratory chain. The immediate electron acceptor for the enzyme is believed to be ubiquinone. This chain is NADH-ubiquinone oxidoreductase chain 4 (MT-ND4), found in Agkistrodon piscivorus piscivorus (Eastern cottonmouth).